Here is an 88-residue protein sequence, read N- to C-terminus: Putative membrane protein insertion efficiency factor (88 aa).

The disordered stretch occupies residues 68–88 (VPPKKDKNADSEHSCKVHHHH). Over residues 69–82 (PPKKDKNADSEHSC) the composition is skewed to basic and acidic residues.

Belongs to the UPF0161 family.

It is found in the cell membrane. Its function is as follows. Could be involved in insertion of integral membrane proteins into the membrane. The polypeptide is Putative membrane protein insertion efficiency factor (Listeria monocytogenes serovar 1/2a (strain ATCC BAA-679 / EGD-e)).